Here is a 376-residue protein sequence, read N- to C-terminus: N-acetyldiaminopimelate deacetylase (376 aa).

The active site involves Asp69. The active-site Proton acceptor is the Glu128.

The protein belongs to the peptidase M20A family. N-acetyldiaminopimelate deacetylase subfamily.

It catalyses the reaction N-acetyl-(2S,6S)-2,6-diaminopimelate + H2O = (2S,6S)-2,6-diaminopimelate + acetate. Its pathway is amino-acid biosynthesis; L-lysine biosynthesis via DAP pathway; LL-2,6-diaminopimelate from (S)-tetrahydrodipicolinate (acetylase route): step 3/3. Its function is as follows. Catalyzes the conversion of N-acetyl-diaminopimelate to diaminopimelate and acetate. This chain is N-acetyldiaminopimelate deacetylase, found in Streptococcus pneumoniae (strain Hungary19A-6).